The sequence spans 270 residues: 2-oxoglutarate synthase subunit KorB (270 aa).

Heterotetramer of the KorA, KorB, KorC and KorD subunits.

It carries out the reaction 2 oxidized [2Fe-2S]-[ferredoxin] + 2-oxoglutarate + CoA = succinyl-CoA + 2 reduced [2Fe-2S]-[ferredoxin] + CO2 + H(+). The polypeptide is 2-oxoglutarate synthase subunit KorB (korB) (Methanocaldococcus jannaschii (strain ATCC 43067 / DSM 2661 / JAL-1 / JCM 10045 / NBRC 100440) (Methanococcus jannaschii)).